Here is a 608-residue protein sequence, read N- to C-terminus: N(6)-adenosine-methyltransferase MT-A70-like protein (608 aa).

Residues 250-265 (KKKQERRDEKELRPDV) show a composition bias toward basic and acidic residues. Residues 250–272 (KKKQERRDEKELRPDVDAGENVT) are disordered. S-adenosyl-L-methionine is bound by residues 395 to 396 (DL) and Asp-413. The interval 414–428 (PPWDIHMELPYGTMS) is gate loop 1. The segment at 480-497 (QLQRIIRTGRTGHWLNHG) is interphase loop. Positions 483-496 (RIIRTGRTGHWLNH) are positively charged region required for RNA-binding. The gate loop 2 stretch occupies residues 525 to 533 (VRATSHKPD). S-adenosyl-L-methionine-binding positions include Lys-531, 554-557 (RPHN), and 567-568 (NQ).

It belongs to the MT-A70-like family. Component of the WMM complex, a N6-methyltransferase complex composed of a catalytic subcomplex, named MAC, and of an associated subcomplex, named MACOM. The MAC subcomplex is composed of Ime4/Mettl3 and Mettl14. The MACOM subcomplex is composed of fl(2)d, Flacc/Xio, Hakai, vir, and, in some cases of nito. As to expression, expressed in testes. In the ovaries, detected in germaria, prefollicle, follicle and polar cells (at protein levels). Detected in the ooplasm and in the cells of the 16-cell cyst of early stages (at protein levels).

It localises to the nucleus. It carries out the reaction an adenosine in mRNA + S-adenosyl-L-methionine = an N(6)-methyladenosine in mRNA + S-adenosyl-L-homocysteine + H(+). In terms of biological role, catalytic component of the WMM complex, a complex that mediates N6-methyladenosine (m6A) methylation of mRNAs, a modification that plays a role in the efficiency of mRNA splicing and is required for sex determination. In the heterodimer formed with Mettl14, constitutes the catalytic core. Required for sex determination and dosage compensation via Sxl alternative splicing: m6A methylation acts as a key regulator of Sxl pre-mRNA and promotes female-specific alternative splicing of Sxl, which determines female physiognomy. M6A methylation is also required for neuronal functions. During oogenesis, required for egg chamber development probably as part of the N/Notch signaling. The protein is N(6)-adenosine-methyltransferase MT-A70-like protein of Drosophila melanogaster (Fruit fly).